Consider the following 328-residue polypeptide: Probable cell division protein WhiA (328 aa).

Residues S273–S306 constitute a DNA-binding region (H-T-H motif).

Belongs to the WhiA family. In terms of assembly, monomer in solution.

Involved in cell division and chromosome segregation. Involved in sporulation. May coordinate the cessation of aerial hyphae growth and subsequent chromosome segregation and/or septation. Required for expression of the ParB partioning protein during sporogenesis. Activates its own transcription and represses WhiB. Binds with low affinity to its own promoter and to the Parp2 sporulation-specific promoter. Also binds directly to the RNA polymerase sigma factor WhiG, leading to inhibition of WhiG-dependent transcription in a dose-dependent manner. The protein is Probable cell division protein WhiA of Streptomyces coelicolor (strain ATCC BAA-471 / A3(2) / M145).